A 156-amino-acid polypeptide reads, in one-letter code: Small ribosomal subunit protein uS7 (156 aa).

It belongs to the universal ribosomal protein uS7 family. In terms of assembly, part of the 30S ribosomal subunit. Contacts proteins S9 and S11.

One of the primary rRNA binding proteins, it binds directly to 16S rRNA where it nucleates assembly of the head domain of the 30S subunit. Is located at the subunit interface close to the decoding center, probably blocks exit of the E-site tRNA. This chain is Small ribosomal subunit protein uS7, found in Azotobacter vinelandii (strain DJ / ATCC BAA-1303).